We begin with the raw amino-acid sequence, 410 residues long: Probable tRNA sulfurtransferase (410 aa).

The region spanning 58–167 (AELTRRLQEV…RREIFVSVER (110 aa)) is the THUMP domain. Residues 185-186 (LL), 210-211 (HF), Arg-267, Gly-289, and Gln-298 each bind ATP.

This sequence belongs to the ThiI family.

It is found in the cytoplasm. It catalyses the reaction [ThiI sulfur-carrier protein]-S-sulfanyl-L-cysteine + a uridine in tRNA + 2 reduced [2Fe-2S]-[ferredoxin] + ATP + H(+) = [ThiI sulfur-carrier protein]-L-cysteine + a 4-thiouridine in tRNA + 2 oxidized [2Fe-2S]-[ferredoxin] + AMP + diphosphate. The enzyme catalyses [ThiS sulfur-carrier protein]-C-terminal Gly-Gly-AMP + S-sulfanyl-L-cysteinyl-[cysteine desulfurase] + AH2 = [ThiS sulfur-carrier protein]-C-terminal-Gly-aminoethanethioate + L-cysteinyl-[cysteine desulfurase] + A + AMP + 2 H(+). It functions in the pathway cofactor biosynthesis; thiamine diphosphate biosynthesis. Catalyzes the ATP-dependent transfer of a sulfur to tRNA to produce 4-thiouridine in position 8 of tRNAs, which functions as a near-UV photosensor. Also catalyzes the transfer of sulfur to the sulfur carrier protein ThiS, forming ThiS-thiocarboxylate. This is a step in the synthesis of thiazole, in the thiamine biosynthesis pathway. The sulfur is donated as persulfide by IscS. This chain is Probable tRNA sulfurtransferase, found in Nocardia farcinica (strain IFM 10152).